The following is a 387-amino-acid chain: Putative transposase y4pF/y4sB (387 aa).

The protein belongs to the transposase 20 family.

This chain is Putative transposase y4pF/y4sB, found in Sinorhizobium fredii (strain NBRC 101917 / NGR234).